We begin with the raw amino-acid sequence, 60 residues long: Large ribosomal subunit protein bL32 (60 aa).

The tract at residues 1 to 60 (MAVQQNKKSRSARDMRRSHDALSENALSVEKTTGEVHLRHHVSPEGVYRGRKVVDKGADE) is disordered. Residues 11 to 22 (SARDMRRSHDAL) are compositionally biased toward basic and acidic residues.

Belongs to the bacterial ribosomal protein bL32 family.

This Pseudomonas putida (strain ATCC 700007 / DSM 6899 / JCM 31910 / BCRC 17059 / LMG 24140 / F1) protein is Large ribosomal subunit protein bL32.